The primary structure comprises 456 residues: GTPase Der (456 aa).

EngA-type G domains follow at residues 2-167 and 176-351; these read LKVA…DQFG and ATFC…AQLK. Residues 8 to 15, 55 to 59, 118 to 121, 182 to 189, 229 to 233, and 294 to 297 contribute to the GTP site; these read GKPNVGKS, DTGGL, NKIE, DTAGI, and NKWD. Residues 352 to 436 form the KH-like domain; that stretch reads IKISTSLLND…PITLYFKSKN (85 aa).

This sequence belongs to the TRAFAC class TrmE-Era-EngA-EngB-Septin-like GTPase superfamily. EngA (Der) GTPase family. In terms of assembly, associates with the 50S ribosomal subunit.

In terms of biological role, GTPase that plays an essential role in the late steps of ribosome biogenesis. The sequence is that of GTPase Der from Mycoplasmoides gallisepticum (strain R(low / passage 15 / clone 2)) (Mycoplasma gallisepticum).